The following is a 92-amino-acid chain: Acyl carrier protein AcpXL (92 aa).

One can recognise a Carrier domain in the interval 2–88 (TATFDKVADI…NLCAKIDELK (87 aa)). Ser-37 is subject to O-(pantetheine 4'-phosphoryl)serine.

In terms of processing, 4'-phosphopantetheine is transferred from CoA to a specific serine of apo-ACP by AcpS. This modification is essential for activity because fatty acids are bound in thioester linkage to the sulfhydryl of the prosthetic group.

Its subcellular location is the cytoplasm. The protein operates within glycolipid biosynthesis; KDO(2)-lipid A biosynthesis. In terms of biological role, carrier of the growing fatty acid chain in fatty acid biosynthesis. Is involved in the transfer of long hydroxylated fatty acids to lipid A. Is acylated predominantly with 27-hydroxyoctacosanoic acid. The protein is Acyl carrier protein AcpXL (acpXL) of Rhizobium etli (strain ATCC 51251 / DSM 11541 / JCM 21823 / NBRC 15573 / CFN 42).